A 272-amino-acid polypeptide reads, in one-letter code: Undecaprenyl-diphosphatase (272 aa).

The next 8 membrane-spanning stretches (helical) occupy residues 2–22 (LELI…WLPI), 50–70 (VIQL…LFPF), 83–103 (FSLW…GVPF), 110–130 (LFYN…LFII), 148–168 (LGYK…IPGT), 195–215 (LAIP…GFAF), 220–240 (LIIL…AIKF), and 250–270 (FKAF…YFLA).

This sequence belongs to the UppP family.

It is found in the cell membrane. It carries out the reaction di-trans,octa-cis-undecaprenyl diphosphate + H2O = di-trans,octa-cis-undecaprenyl phosphate + phosphate + H(+). In terms of biological role, catalyzes the dephosphorylation of undecaprenyl diphosphate (UPP). Confers resistance to bacitracin. This chain is Undecaprenyl-diphosphatase, found in Acetivibrio thermocellus (strain ATCC 27405 / DSM 1237 / JCM 9322 / NBRC 103400 / NCIMB 10682 / NRRL B-4536 / VPI 7372) (Clostridium thermocellum).